The chain runs to 716 residues: Segment polarity protein dishevelled homolog DVL-3 (716 aa).

In terms of domain architecture, DIX spans 1–82 (MGETKIIYHL…RVVSWLVSAE (82 aa)). Arg27 carries the omega-N-methylarginine modification. 2 positions are modified to phosphoserine: Ser48 and Ser125. Positions 85–235 (HPEPAPFCAD…VSRIERSSSF (151 aa)) are disordered. Basic and acidic residues predominate over residues 142-156 (QRERPRRRDGPEHAA). The span at 175 to 190 (SSSTLMSSELETTSFF) shows a compositional bias: low complexity. At Ser192 the chain carries Phosphoserine. Residues 199–212 (SRFSSSTEQSSASR) show a composition bias toward low complexity. At Arg212 the chain carries Omega-N-methylarginine. The span at 213–226 (LMRRHKRRRRKQKV) shows a compositional bias: basic residues. Residues 249–321 (TVTLNMEKYN…NDDAVRVLRE (73 aa)) form the PDZ domain. Arg271 bears the Asymmetric dimethylarginine; by PRMT1; alternate mark. Residues Arg271 and Arg342 each carry the symmetric dimethylarginine; by PRMT7; alternate modification. An Omega-N-methylarginine; alternate modification is found at Arg342. The residue at position 346 (Thr346) is a Phosphothreonine. A DEP domain is found at 422–496 (PESGLEVRDR…SEQCYYIFGD (75 aa)). Residues 546-691 (PYNPHPGFPE…PPGRDLASVP (146 aa)) form a disordered region. Positions 565 to 581 (ASSQHSEGSRSSGSNRS) are enriched in low complexity. Basic and acidic residues-rich tracts occupy residues 582-595 (GSDRRKEKDPKAGD) and 604-622 (ESDHTTRSSLRGPRERAPS). Arg614 carries the post-translational modification Symmetric dimethylarginine; by PRMT7. 2 stretches are compositionally biased toward pro residues: residues 653–663 (YGPPGVPPLYG) and 670–682 (TPPPAAMGPPGAP). Ser697 is subject to Phosphoserine. Omega-N-methylarginine; alternate is present on Arg698. A Dimethylated arginine; alternate modification is found at Arg698. A Phosphoserine modification is found at Ser700.

This sequence belongs to the DSH family. As to quaternary structure, interacts (via the PDZ domain) with the C-terminal regions of VANGL1 and VANGL2. Interacts (via the region containing both the PDZ and DEP domains) with LRRFIP2; the DIX domain may inhibit this interaction. Interacts with CYLD. Interacts with CEP164 and DAB2. Interacts with DCDC2. Interacts with FOXK1 and FOXK2. Interacts with DAAM2. Post-translationally, ubiquitinated. Deubiquitinated by CYLD, which acts on 'Lys-63'-linked ubiquitin chains. In terms of processing, phosphorylated by CSNK1D. Arginine methylation may function as a switch in regulation of function in Wnt signaling. In terms of tissue distribution, ubiquitous.

It localises to the cytoplasm. Involved in the signal transduction pathway mediated by multiple Wnt genes. This chain is Segment polarity protein dishevelled homolog DVL-3 (Dvl3), found in Mus musculus (Mouse).